The primary structure comprises 332 residues: ATP-dependent (S)-NAD(P)H-hydrate dehydratase (332 aa).

The region spanning 46–326 is the YjeF C-terminal domain; the sequence is LLERARNIVP…EQIHNVFDDI (281 aa). Residues glycine 146 and 199–205 contribute to the (6S)-NADPHX site; that span reads NAIEFCR. ATP contacts are provided by residues 230–234 and 251–260; these read KGLND and GSGRRCGGQG. Residue aspartate 261 coordinates (6S)-NADPHX.

Belongs to the NnrD/CARKD family. Mg(2+) serves as cofactor.

The catalysed reaction is (6S)-NADHX + ATP = ADP + phosphate + NADH + H(+). The enzyme catalyses (6S)-NADPHX + ATP = ADP + phosphate + NADPH + H(+). Catalyzes the dehydration of the S-form of NAD(P)HX at the expense of ATP, which is converted to ADP. Together with NAD(P)HX epimerase, which catalyzes the epimerization of the S- and R-forms, the enzyme allows the repair of both epimers of NAD(P)HX, a damaged form of NAD(P)H that is a result of enzymatic or heat-dependent hydration. This chain is ATP-dependent (S)-NAD(P)H-hydrate dehydratase, found in Aedes aegypti (Yellowfever mosquito).